A 156-amino-acid chain; its full sequence is MAPAVTRLLFLQLVLGPTLVMDIKMQIGSRNFYTLSIDYPRVNYPKGFRGYCNGLMSYMRGKMQNSDCPKIHYVIHAPWKAIQKFCKYSDSFCENYNEYCTLTQDSLPITVCSLSHQQPPTSCYYNSTLTNQKLYLLCSRKYEADPIGIAGLYSGI.

The first 20 residues, 1 to 20, serve as a signal peptide directing secretion; sequence MAPAVTRLLFLQLVLGPTLV. N-linked (GlcNAc...) asparagine glycosylation occurs at Asn126.

The protein belongs to the pancreatic ribonuclease family.

The protein resides in the secreted. Does not exhibit any ribonuclease activity. This Homo sapiens (Human) protein is Probable inactive ribonuclease-like protein 13 (RNASE13).